Here is a 351-residue protein sequence, read N- to C-terminus: MSTPSSLQALVKKVLATQHISKEHYFILKYCGLWWHGAPIMLSTNENNQLMIKSAIFKDGLDLNLALMKAVQENNYDLIELFTEWGADITSSLITVNTEHTWNFCRELGAKILNEMDIVHIFYKIHRIKTSSNIILCHKLLSNKPLFQNIEGLKIIICCFLEKIPINFILNEITFNEMLTRYWYSMAIQYNLTEAIQYFYQRYSHFKDWRLICGLSFNNVSDLHDHIKKVDMNIDEMMYLACMRDSNFLTIFYCFVLGADINRAMVTAVKKFYTNNLFFCIDLGANAFEESLELAKQKNNDILAELLSFKDYYSSNASLLSLKTTDPEKINALLKNYKSKNIMRYKKLSRK.

It belongs to the asfivirus MGF 360 family.

In terms of biological role, plays a role in virus cell tropism, and may be required for efficient virus replication in macrophages. The protein is Protein MGF 360-2L of African swine fever virus (isolate Tick/South Africa/Pretoriuskop Pr4/1996) (ASFV).